The primary structure comprises 493 residues: Probable phospho-2-dehydro-3-deoxyheptonate aldolase, chloroplastic (493 aa).

The transit peptide at 1–58 (MAMSNTSALASKLLPSCKPHQPTLTFFSPSTTCQKKPRSSRPISAAVHVTQPPKTPIS) directs the protein to the chloroplast.

This sequence belongs to the class-II DAHP synthase family.

Its subcellular location is the plastid. It is found in the chloroplast. The catalysed reaction is D-erythrose 4-phosphate + phosphoenolpyruvate + H2O = 7-phospho-2-dehydro-3-deoxy-D-arabino-heptonate + phosphate. The protein operates within metabolic intermediate biosynthesis; chorismate biosynthesis; chorismate from D-erythrose 4-phosphate and phosphoenolpyruvate: step 1/7. The polypeptide is Probable phospho-2-dehydro-3-deoxyheptonate aldolase, chloroplastic (DHS1) (Catharanthus roseus (Madagascar periwinkle)).